A 190-amino-acid polypeptide reads, in one-letter code: Lipid A acyltransferase PagP (190 aa).

Positions 1 to 18 are cleaved as a signal peptide; it reads MKRLISCLTIICALNASA. Active-site residues include histidine 60, aspartate 103, and serine 104.

Belongs to the lipid A palmitoyltransferase family. Homodimer.

Its subcellular location is the cell outer membrane. The catalysed reaction is a lipid A + a 1,2-diacyl-sn-glycero-3-phosphocholine = a hepta-acyl lipid A + a 2-acyl-sn-glycero-3-phosphocholine. It catalyses the reaction a lipid IVA + a 1,2-diacyl-sn-glycero-3-phosphocholine = a lipid IVB + a 2-acyl-sn-glycero-3-phosphocholine. It carries out the reaction a lipid IIA + a 1,2-diacyl-sn-glycero-3-phosphocholine = a lipid IIB + a 2-acyl-sn-glycero-3-phosphocholine. Transfers a fatty acid residue from the sn-1 position of a phospholipid to the N-linked hydroxyfatty acid chain on the proximal unit of lipid A or its precursors. The polypeptide is Lipid A acyltransferase PagP (Legionella pneumophila (strain Paris)).